The primary structure comprises 331 residues: Flagellar P-ring protein (331 aa).

A signal peptide spans 1–25; sequence MKKRLAVLLVIVLTITFSFSVTTRI.

It belongs to the FlgI family. As to quaternary structure, the basal body constitutes a major portion of the flagellar organelle and consists of four rings (L,P,S, and M) mounted on a central rod.

The protein localises to the periplasm. It is found in the bacterial flagellum basal body. Functionally, assembles around the rod to form the L-ring and probably protects the motor/basal body from shearing forces during rotation. This is Flagellar P-ring protein from Thermotoga petrophila (strain ATCC BAA-488 / DSM 13995 / JCM 10881 / RKU-1).